Consider the following 182-residue polypeptide: Large ribosomal subunit protein uL6 (182 aa).

The protein belongs to the universal ribosomal protein uL6 family. As to quaternary structure, part of the 50S ribosomal subunit.

This protein binds to the 23S rRNA, and is important in its secondary structure. It is located near the subunit interface in the base of the L7/L12 stalk, and near the tRNA binding site of the peptidyltransferase center. This chain is Large ribosomal subunit protein uL6, found in Nostoc punctiforme (strain ATCC 29133 / PCC 73102).